The chain runs to 2205 residues: Genome polyprotein (2205 aa).

Residue glycine 2 is the site of N-myristoyl glycine; by host attachment. Residues 2–1518 (GAQVSSQKVG…NINRAMTILQ (1517 aa)) are Cytoplasmic-facing. The interval 579 to 599 (GLGDLIEGVVEGVTRNALTPL) is amphipathic alpha-helix. Over residues 598-613 (PLTPVNNLPDTRSSGP) the composition is skewed to polar residues. A disordered region spans residues 598–619 (PLTPVNNLPDTRSSGPAHSKET). Catalysis depends on for protease 2A activity residues histidine 899 and aspartate 917. Positions 934 and 936 each coordinate Zn(2+). The active-site For protease 2A activity is cysteine 988. Residues cysteine 994 and histidine 996 each contribute to the Zn(2+) site. The tract at residues 1126–1198 (GDSWLKKFTE…HQSCPSQEHQ (73 aa)) is membrane-binding. Residues 1126-1264 (GDSWLKKFTE…SPGTGKSVAT (139 aa)) form an oligomerization region. An RNA-binding region spans residues 1147–1151 (SNKIS). Residues 1230 to 1386 (EHTINNYVQF…SEYSRDGKLN (157 aa)) form the SF3 helicase domain. ATP is bound at residue 1254 to 1261 (GSPGTGKS). Cysteine 1394, cysteine 1397, cysteine 1406, and cysteine 1411 together coordinate Zn(2+). The segment at 1394 to 1411 (CKNCHQPANFKRCCPLVC) adopts a C4-type zinc-finger fold. The segment at 1438 to 1445 (ERNRRSSI) is RNA-binding. Residues 1449–1454 (MEALFQ) are oligomerization. The stretch at 1519-1534 (AVTTFAAVAGVVYVMY) is an intramembrane region. Topologically, residues 1535-2205 (KLFAGHQGAY…TLYRRWLDSF (671 aa)) are cytoplasmic. The residue at position 1544 (tyrosine 1544) is an O-(5'-phospho-RNA)-tyrosine. The region spanning 1564 to 1742 (GPGFDYAVAM…FAAALKRSYF (179 aa)) is the Peptidase C3 domain. Active-site for protease 3C activity residues include histidine 1603, glutamate 1634, and cysteine 1710. The 116-residue stretch at 1971 to 2086 (MEEKLFDYTG…SYPHEVDASL (116 aa)) folds into the RdRp catalytic domain. Mg(2+) contacts are provided by aspartate 1977 and aspartate 2072.

It belongs to the picornaviruses polyprotein family. In terms of assembly, interacts with capsid protein VP1 and capsid protein VP3 to form heterotrimeric protomers. Interacts with capsid protein VP0, and capsid protein VP3 to form heterotrimeric protomers. Interacts with human PVR. Five protomers subsequently associate to form pentamers which serve as building blocks for the capsid. Interacts with capsid protein VP2, capsid protein VP3 and capsid protein VP4 following cleavage of capsid protein VP0. As to quaternary structure, interacts with capsid protein VP1 and capsid protein VP3 in the mature capsid. In terms of assembly, interacts with capsid protein VP0 and capsid protein VP1 to form heterotrimeric protomers. Five protomers subsequently associate to form pentamers which serve as building blocks for the capsid. Interacts with capsid protein VP4 in the mature capsid. Interacts with protein 2C; this interaction may be important for virion morphogenesis. Interacts with capsid protein VP1 and capsid protein VP3. As to quaternary structure, homodimer. In terms of assembly, homohexamer; forms a hexameric ring structure with 6-fold symmetry characteristic of AAA+ ATPases. Interacts (via N-terminus) with host RTN3 (via reticulon domain); this interaction is important for viral replication. Interacts with capsid protein VP3; this interaction may be important for virion morphogenesis. Interacts with protein 3CD. As to quaternary structure, homodimer. Interacts with host GBF1. Interacts (via GOLD domain) with host ACBD3 (via GOLD domain); this interaction allows the formation of a viral protein 3A/ACBD3 heterotetramer with a 2:2 stoichiometry, which will stimulate the recruitment of host PI4KB in order to synthesize PI4P at the viral RNA replication sites. In terms of assembly, interacts with RNA-directed RNA polymerase. Interacts with protein 3AB and with RNA-directed RNA polymerase. As to quaternary structure, interacts with Viral protein genome-linked and with protein 3CD. Mg(2+) serves as cofactor. Post-translationally, specific enzymatic cleavages in vivo by the viral proteases yield processing intermediates and the mature proteins. In terms of processing, myristoylation is required for the formation of pentamers during virus assembly. Further assembly of 12 pentamers and a molecule of genomic RNA generates the provirion. During virion maturation, immature virions are rendered infectious following cleavage of VP0 into VP4 and VP2. This maturation seems to be an autocatalytic event triggered by the presence of RNA in the capsid and it is followed by a conformational change infectious virion. Post-translationally, myristoylation is required during RNA encapsidation and formation of the mature virus particle. In terms of processing, VPg is uridylylated by the polymerase into VPg-pUpU. This acts as a nucleotide-peptide primer for the genomic RNA replication.

The protein localises to the virion. It is found in the host cytoplasm. Its subcellular location is the host cytoplasmic vesicle membrane. The protein resides in the host nucleus. It carries out the reaction a ribonucleoside 5'-triphosphate + H2O = a ribonucleoside 5'-diphosphate + phosphate + H(+). The catalysed reaction is Selective cleavage of Tyr-|-Gly bond in the picornavirus polyprotein.. It catalyses the reaction RNA(n) + a ribonucleoside 5'-triphosphate = RNA(n+1) + diphosphate. The enzyme catalyses Selective cleavage of Gln-|-Gly bond in the poliovirus polyprotein. In other picornavirus reactions Glu may be substituted for Gln, and Ser or Thr for Gly.. With respect to regulation, replication or transcription is subject to high level of random mutations by the nucleotide analog ribavirin. Its function is as follows. Forms an icosahedral capsid of pseudo T=3 symmetry with capsid proteins VP2 and VP3. The capsid is 300 Angstroms in diameter, composed of 60 copies of each capsid protein and enclosing the viral positive strand RNA genome. Capsid protein VP1 mainly forms the vertices of the capsid. Capsid protein VP1 interacts with host cell receptor PVR to provide virion attachment to target host cells. This attachment induces virion internalization predominantly through clathrin- and caveolin-independent endocytosis in Hela cells and through caveolin-mediated endocytosis in brain microvascular endothelial cells. Tyrosine kinases are probably involved in the entry process. Virus binding to PVR induces increased junctional permeability and rearrangement of junctional proteins. Modulation of endothelial tight junctions, as well as cytolytic infection of endothelial cells themselves, may result in loss of endothelial integrity which may help the virus to reach the CNS. After binding to its receptor, the capsid undergoes conformational changes. Capsid protein VP1 N-terminus (that contains an amphipathic alpha-helix) and capsid protein VP4 are externalized. Together, they shape a pore in the host membrane through which viral genome is translocated to host cell cytoplasm. Functionally, forms an icosahedral capsid of pseudo T=3 symmetry with capsid proteins VP2 and VP3. The capsid is 300 Angstroms in diameter, composed of 60 copies of each capsid protein and enclosing the viral positive strand RNA genome. In terms of biological role, lies on the inner surface of the capsid shell. After binding to the host receptor, the capsid undergoes conformational changes. Capsid protein VP4 is released, Capsid protein VP1 N-terminus is externalized, and together, they shape a pore in the host membrane through which the viral genome is translocated into the host cell cytoplasm. Component of immature procapsids, which is cleaved into capsid proteins VP4 and VP2 after maturation. Allows the capsid to remain inactive before the maturation step. Its function is as follows. Cysteine protease that cleaves viral polyprotein and specific host proteins. It is responsible for the autocatalytic cleavage between the P1 and P2 regions, which is the first cleavage occurring in the polyprotein. Also cleaves the host translation initiation factor EIF4G1, in order to shut down the capped cellular mRNA translation. Inhibits the host nucleus-cytoplasm protein and RNA trafficking by cleaving host members of the nuclear pores including NUP98, NUP62 and NUP153. Counteracts stress granule formation probably by antagonizing its assembly or promoting its dissassembly. Cleaves and inhibits host IFIH1/MDA5, thereby inhibiting the type-I IFN production and the establishment of the antiviral state. Cleaves and inhibits host MAVS, thereby inhibiting the type-I IFN production and the establishment of the antiviral state. Functionally, plays an essential role in the virus replication cycle by acting as a viroporin. Creates a pore in the host endoplasmic reticulum and as a consequence releases Ca2+ in the cytoplasm of infected cell. In turn, high levels of cytoplasmic calcium may trigger membrane trafficking and transport of viral ER-associated proteins to viroplasms, sites of viral genome replication. In terms of biological role, induces and associates with structural rearrangements of intracellular membranes. Displays RNA-binding, nucleotide binding and NTPase activities. May play a role in virion morphogenesis and viral RNA encapsidation by interacting with the capsid protein VP3. Localizes the viral replication complex to the surface of membranous vesicles. Together with protein 3CD binds the Cis-Active RNA Element (CRE) which is involved in RNA synthesis initiation. Acts as a cofactor to stimulate the activity of 3D polymerase, maybe through a nucleid acid chaperone activity. Its function is as follows. Localizes the viral replication complex to the surface of membranous vesicles. It inhibits host cell endoplasmic reticulum-to-Golgi apparatus transport and causes the disassembly of the Golgi complex, possibly through GBF1 interaction. This would result in depletion of MHC, trail receptors and IFN receptors at the host cell surface. Plays an essential role in viral RNA replication by recruiting ACBD3 and PI4KB at the viral replication sites, thereby allowing the formation of the rearranged membranous structures where viral replication takes place. Functionally, acts as a primer for viral RNA replication and remains covalently bound to viral genomic RNA. VPg is uridylylated prior to priming replication into VPg-pUpU. The oriI viral genomic sequence may act as a template for this. The VPg-pUpU is then used as primer on the genomic RNA poly(A) by the RNA-dependent RNA polymerase to replicate the viral genome. During genome replication, the VPg-RNA linkage is removed by the host TDP2, thereby accelerating replication. During the late stage of the replication cycle, host TDP2 is excluded from sites of viral RNA synthesis and encapsidation, allowing for the generation of progeny virions. In terms of biological role, involved in the viral replication complex and viral polypeptide maturation. It exhibits protease activity with a specificity and catalytic efficiency that is different from protease 3C. Protein 3CD lacks polymerase activity. Protein 3CD binds to the 5'UTR of the viral genome. Major viral protease that mediates proteolytic processing of the polyprotein. Cleaves host EIF5B, contributing to host translation shutoff. Also cleaves host PABPC1, contributing to host translation shutoff. Cleaves host RIGI and thus contributes to the inhibition of type I interferon production. Cleaves host NLRP1, triggers host N-glycine-mediated degradation of the autoinhibitory NLRP1 N-terminal fragment. Inhibits the integrated stress response (ISR) in the infected cell by cleaving host G3BP1. Stress granule formation is thus inhibited, which allows protein synthesis and viral replication. Its function is as follows. Replicates the viral genomic RNA on the surface of intracellular membranes. May form linear arrays of subunits that propagate along a strong head-to-tail interaction called interface-I. Covalently attaches UMP to a tyrosine of VPg, which is used to prime RNA synthesis. The positive stranded RNA genome is first replicated at virus induced membranous vesicles, creating a dsRNA genomic replication form. This dsRNA is then used as template to synthesize positive stranded RNA genomes. ss(+)RNA genomes are either translated, replicated or encapsidated. This is Genome polyprotein from Homo sapiens (Human).